The chain runs to 118 residues: Large ribosomal subunit protein bL20 (118 aa).

The protein belongs to the bacterial ribosomal protein bL20 family.

Binds directly to 23S ribosomal RNA and is necessary for the in vitro assembly process of the 50S ribosomal subunit. It is not involved in the protein synthesizing functions of that subunit. This Yersinia pseudotuberculosis serotype O:1b (strain IP 31758) protein is Large ribosomal subunit protein bL20.